A 347-amino-acid chain; its full sequence is Quinolinate synthase (347 aa).

His47 and Ser68 together coordinate iminosuccinate. Cys113 contacts [4Fe-4S] cluster. Iminosuccinate is bound by residues 139-141 and Ser156; that span reads YAN. Cys200 contacts [4Fe-4S] cluster. Iminosuccinate contacts are provided by residues 226-228 and Thr243; that span reads HPE. Position 297 (Cys297) interacts with [4Fe-4S] cluster.

Belongs to the quinolinate synthase family. Type 1 subfamily. Requires [4Fe-4S] cluster as cofactor.

It is found in the cytoplasm. It carries out the reaction iminosuccinate + dihydroxyacetone phosphate = quinolinate + phosphate + 2 H2O + H(+). The protein operates within cofactor biosynthesis; NAD(+) biosynthesis; quinolinate from iminoaspartate: step 1/1. Functionally, catalyzes the condensation of iminoaspartate with dihydroxyacetone phosphate to form quinolinate. The sequence is that of Quinolinate synthase from Shigella boydii serotype 18 (strain CDC 3083-94 / BS512).